Consider the following 559-residue polypeptide: uncharacterized protein (559 aa).

2 disordered regions span residues 315-360 and 454-559; these read TDDA…ERDI and DKID…STEN. Residues 320 to 329 are compositionally biased toward polar residues; it reads NENSDNSMNT. Over residues 348 to 357 the composition is skewed to acidic residues; the sequence is DNNDDSDDSE. Residues 433–495 are a coiled coil; it reads ELKIQEMEKI…KRRQKRSQRS (63 aa). A compositionally biased stretch (basic and acidic residues) spans 454–501; it reads DKIDMDQIKSEMSRRRDESNKRRDEKRKDREEKRRQKRSQRSDTRKQG. The span at 507 to 527 shows a compositional bias: low complexity; it reads SDEATSDQTQSTDSNNTTQTA.

The protein resides in the virion. This is an uncharacterized protein from Acanthamoeba polyphaga mimivirus (APMV).